The chain runs to 1886 residues: Polyprotein P3 (1886 aa).

Disordered stretches follow at residues 1 to 24, 420 to 466, and 478 to 529; these read MATRRLPAVTQTDGSRTATESGVP, RCDS…MQDD, and RMKK…NQPE. The segment covering 9–20 has biased composition (polar residues); the sequence is VTQTDGSRTATE. Residues 488 to 498 show a composition bias toward low complexity; sequence QQALSSQAQEE. The CCHC-type zinc finger occupies 879–896; sequence CKCYICGQEGHYANQCRN. The Peptidase A2 domain occupies 1215–1292; sequence INAIVDTGAT…GLSPGIQMII (78 aa). Residue aspartate 1220 is the For protease activity of the active site. The 191-residue stretch at 1425–1615 folds into the Reverse transcriptase domain; sequence LLQMKVIRPS…PEIDFLGASL (191 aa). Positions 1706–1841 constitute an RNase H type-1 domain; that stretch reads KDSFIIIETD…ADALSRMINF (136 aa). Mg(2+) contacts are provided by aspartate 1715, glutamate 1758, aspartate 1784, and aspartate 1833.

Post-translationally, polyprotein P3 is presumably proteolytically cleaved into several chains by viral protease.

It catalyses the reaction Endonucleolytic cleavage to 5'-phosphomonoester.. It carries out the reaction DNA(n) + a 2'-deoxyribonucleoside 5'-triphosphate = DNA(n+1) + diphosphate. Capsid protein self assembles to form a bacilliform capsid about 90-900 nm in length. The capsid encapsulates the genomic dsDNA. Following virus entry into host cell, provides nuclear import of the viral genome. Virus particles do not enter the nucleus, but are targeted to the nuclear membrane through the interaction with host importins. The chain is Polyprotein P3 from Commelina yellow mottle virus (CoYMV).